A 211-amino-acid chain; its full sequence is Methylthioribulose-1-phosphate dehydratase (211 aa).

Zn(2+) is bound by residues histidine 101 and histidine 103.

It belongs to the aldolase class II family. MtnB subfamily. Zn(2+) serves as cofactor.

The catalysed reaction is 5-(methylsulfanyl)-D-ribulose 1-phosphate = 5-methylsulfanyl-2,3-dioxopentyl phosphate + H2O. It participates in amino-acid biosynthesis; L-methionine biosynthesis via salvage pathway; L-methionine from S-methyl-5-thio-alpha-D-ribose 1-phosphate: step 2/6. Catalyzes the dehydration of methylthioribulose-1-phosphate (MTRu-1-P) into 2,3-diketo-5-methylthiopentyl-1-phosphate (DK-MTP-1-P). This chain is Methylthioribulose-1-phosphate dehydratase, found in Alcanivorax borkumensis (strain ATCC 700651 / DSM 11573 / NCIMB 13689 / SK2).